Here is a 134-residue protein sequence, read N- to C-terminus: ATP synthase epsilon chain, chloroplastic (134 aa).

Belongs to the ATPase epsilon chain family. F-type ATPases have 2 components, CF(1) - the catalytic core - and CF(0) - the membrane proton channel. CF(1) has five subunits: alpha(3), beta(3), gamma(1), delta(1), epsilon(1). CF(0) has three main subunits: a, b and c.

It is found in the plastid. The protein resides in the chloroplast thylakoid membrane. Produces ATP from ADP in the presence of a proton gradient across the membrane. The chain is ATP synthase epsilon chain, chloroplastic from Spinacia oleracea (Spinach).